Reading from the N-terminus, the 892-residue chain is Alanine--tRNA ligase (892 aa).

Zn(2+)-binding residues include H580, H584, C682, and H686.

It belongs to the class-II aminoacyl-tRNA synthetase family. It depends on Zn(2+) as a cofactor.

Its subcellular location is the cytoplasm. The enzyme catalyses tRNA(Ala) + L-alanine + ATP = L-alanyl-tRNA(Ala) + AMP + diphosphate. Functionally, catalyzes the attachment of alanine to tRNA(Ala) in a two-step reaction: alanine is first activated by ATP to form Ala-AMP and then transferred to the acceptor end of tRNA(Ala). Also edits incorrectly charged Ser-tRNA(Ala) and Gly-tRNA(Ala) via its editing domain. The chain is Alanine--tRNA ligase from Salinispora tropica (strain ATCC BAA-916 / DSM 44818 / JCM 13857 / NBRC 105044 / CNB-440).